A 228-amino-acid polypeptide reads, in one-letter code: MEKGVYIIGTNTDIGKTFISGLILKKLREEGRNAGYYKAVLSGAIKEKNGLIPLDCEEVMKISGLKESYENMVSYILENPYSPHLASEVEEVSISMEKIKKDYKSVRDKYDFILCEGSGGIVCPISFSEKKLMLEDIIKEFNLQIILVSNSGLGTINYTVLTVSYLRNLGLKVKGIILNKFNKSDIIHRDNKKIIKELTGVNNISTVPKIEDIEKYDLNELNEVLYGI.

13–18 (DIGKTF) serves as a coordination point for ATP. Thr-17 lines the Mg(2+) pocket. Lys-38 is a catalytic residue. Residue Ser-42 participates in substrate binding. Residues Asp-55, 116–119 (EGSG), 179–180 (NK), and 208–210 (PKI) contribute to the ATP site. Asp-55 and Glu-116 together coordinate Mg(2+).

Belongs to the dethiobiotin synthetase family. As to quaternary structure, homodimer. Requires Mg(2+) as cofactor.

It is found in the cytoplasm. The catalysed reaction is (7R,8S)-7,8-diammoniononanoate + CO2 + ATP = (4R,5S)-dethiobiotin + ADP + phosphate + 3 H(+). Its pathway is cofactor biosynthesis; biotin biosynthesis; biotin from 7,8-diaminononanoate: step 1/2. Its function is as follows. Catalyzes a mechanistically unusual reaction, the ATP-dependent insertion of CO2 between the N7 and N8 nitrogen atoms of 7,8-diaminopelargonic acid (DAPA, also called 7,8-diammoniononanoate) to form a ureido ring. This is ATP-dependent dethiobiotin synthetase BioD from Clostridium perfringens (strain 13 / Type A).